The chain runs to 476 residues: Ribulose bisphosphate carboxylase large chain (476 aa).

Substrate is bound by residues Asn-124 and Thr-174. The active-site Proton acceptor is the Lys-176. A substrate-binding site is contributed by Lys-178. Residues Lys-202, Asp-204, and Glu-205 each coordinate Mg(2+). Position 202 is an N6-carboxylysine (Lys-202). His-295 serves as the catalytic Proton acceptor. Residues Arg-296, His-328, and Ser-380 each coordinate substrate.

Belongs to the RuBisCO large chain family. Type I subfamily. As to quaternary structure, heterohexadecamer of 8 large chains and 8 small chains; disulfide-linked. The disulfide link is formed within the large subunit homodimers. Forms complexes of many stoichiometries with Raf1 with and without RbcS. RuBisCO interacts with the C-terminus of CcmM. It depends on Mg(2+) as a cofactor. In terms of processing, the disulfide bond which can form in the large chain dimeric partners within the hexadecamer appears to be associated with oxidative stress and protein turnover.

Its subcellular location is the carboxysome. It catalyses the reaction 2 (2R)-3-phosphoglycerate + 2 H(+) = D-ribulose 1,5-bisphosphate + CO2 + H2O. It carries out the reaction D-ribulose 1,5-bisphosphate + O2 = 2-phosphoglycolate + (2R)-3-phosphoglycerate + 2 H(+). In terms of biological role, ruBisCO catalyzes two reactions: the carboxylation of D-ribulose 1,5-bisphosphate, the primary event in carbon dioxide fixation, as well as the oxidative fragmentation of the pentose substrate in the photorespiration process. Both reactions occur simultaneously and in competition at the same active site. The protein is Ribulose bisphosphate carboxylase large chain of Nostoc sp. (strain PCC 7120 / SAG 25.82 / UTEX 2576).